A 340-amino-acid chain; its full sequence is tRNA N6-adenosine threonylcarbamoyltransferase (340 aa).

2 residues coordinate Fe cation: His111 and His115. Substrate is bound by residues 134–138 (IISGA), Asp167, Gly180, and Asn273. A Fe cation-binding site is contributed by Asp301.

Belongs to the KAE1 / TsaD family. The cofactor is Fe(2+).

Its subcellular location is the cytoplasm. The enzyme catalyses L-threonylcarbamoyladenylate + adenosine(37) in tRNA = N(6)-L-threonylcarbamoyladenosine(37) in tRNA + AMP + H(+). Functionally, required for the formation of a threonylcarbamoyl group on adenosine at position 37 (t(6)A37) in tRNAs that read codons beginning with adenine. Is involved in the transfer of the threonylcarbamoyl moiety of threonylcarbamoyl-AMP (TC-AMP) to the N6 group of A37, together with TsaE and TsaB. TsaD likely plays a direct catalytic role in this reaction. In Wigglesworthia glossinidia brevipalpis, this protein is tRNA N6-adenosine threonylcarbamoyltransferase.